Reading from the N-terminus, the 532-residue chain is Glucose-6-phosphate isomerase (532 aa).

Glutamate 330 functions as the Proton donor in the catalytic mechanism. Catalysis depends on residues histidine 359 and lysine 461.

Belongs to the GPI family.

It is found in the cytoplasm. It catalyses the reaction alpha-D-glucose 6-phosphate = beta-D-fructose 6-phosphate. It participates in carbohydrate biosynthesis; gluconeogenesis. The protein operates within carbohydrate degradation; glycolysis; D-glyceraldehyde 3-phosphate and glycerone phosphate from D-glucose: step 2/4. Functionally, catalyzes the reversible isomerization of glucose-6-phosphate to fructose-6-phosphate. This chain is Glucose-6-phosphate isomerase, found in Synechococcus sp. (strain CC9902).